The chain runs to 236 residues: Putative N-acetylmannosamine-6-phosphate 2-epimerase (236 aa).

The protein belongs to the NanE family.

It catalyses the reaction an N-acyl-D-glucosamine 6-phosphate = an N-acyl-D-mannosamine 6-phosphate. Its pathway is amino-sugar metabolism; N-acetylneuraminate degradation; D-fructose 6-phosphate from N-acetylneuraminate: step 3/5. Functionally, converts N-acetylmannosamine-6-phosphate (ManNAc-6-P) to N-acetylglucosamine-6-phosphate (GlcNAc-6-P). This Listeria welshimeri serovar 6b (strain ATCC 35897 / DSM 20650 / CCUG 15529 / CIP 8149 / NCTC 11857 / SLCC 5334 / V8) protein is Putative N-acetylmannosamine-6-phosphate 2-epimerase.